Consider the following 1247-residue polypeptide: Structural polyprotein (1247 aa).

Residues 36–67 (RPAGQLAQLISAVSRLALRTVPQKPRRTRKIK) are host transcription inhibition. Positions 53–103 (LRTVPQKPRRTRKIKKQKQVKQEQQSTRNQKKKAPKQKQTQKKKRPGRRER) are disordered. Composition is skewed to basic residues over residues 59–71 (KPRR…KQKQ) and 81–100 (NQKK…RPGR). A Nuclear localization signal motif is present at residues 60–98 (PRRTRKIKKQKQVKQEQQSTRNQKKKAPKQKQTQKKKRP). The segment at 83–113 (KKKAPKQKQTQKKKRPGRRERMCMKIENDCI) is binding to the viral RNA. Positions 98 to 112 (PGRRERMCMKIENDC) are ribosome-binding. A disulfide bridge links Cys-112 with Cys-127. The Peptidase S3 domain occupies 112-260 (CIFEVKHEGK…KITPEGSVEW (149 aa)). Residue His-138 is the Charge relay system of the active site. The Nuclear export signal motif lies at 143–153 (IDNADLAKLAF). Positions 154–159 (KRSSKY) are interaction with spike glycoprotein E2. Residue Asp-160 is the Charge relay system of the active site. Positions 182-192 (PEGYYNWHHGA) are dimerization of the capsid protein. The active-site Charge relay system is Ser-212. The segment at 218–222 (DNKGR) is dimerization of the capsid protein. Residues 261–273 (SLALPVMCLLANT) form a functions as an uncleaved signal peptide for the precursor of protein E3/E2 region. 9 disulfide bridges follow: Cys-268–Cys-277, Cys-282–Cys-286, Cys-285–Cys-317, Cys-343–Cys-449, Cys-346–Cys-352, Cys-415–Cys-429, Cys-477–Cys-590, Cys-525–Cys-549, and Cys-527–Cys-544. Asn-272 carries an N-linked (GlcNAc...) asparagine; by host glycan. Residues 325–691 (NARENFNVYK…YYYELYPTTT (367 aa)) are Extracellular-facing. Asn-587 is a glycosylation site (N-linked (GlcNAc...) asparagine; by host). A helical transmembrane segment spans residues 692–712 (IAVLAAASIVVASLVGLSLGM). At 713 to 747 (CICARRRCITPYELTPGATIPFLLGILCCVKTAKA) the chain is on the cytoplasmic side. The segment at 715–719 (CARRR) is interaction with the capsid protein. Residues Cys-720, Cys-740, and Cys-741 are each lipidated (S-palmitoyl cysteine; by host). A transient transmembrane before p62-6K protein processing region spans residues 720-740 (CITPYELTPGATIPFLLGILC). Cys-720 and Cys-741 form a disulfide bridge. At 748–762 (ASYYEAATYLWNEQQ) the chain is on the extracellular side. The helical transmembrane segment at 763 to 783 (PLFWLQLLIPLSAAIVVCNCL) threads the bilayer. The Cytoplasmic portion of the chain corresponds to 784-787 (KLLP). The chain crosses the membrane as a helical span at residues 788-808 (CCCKTLTFLAVMSIGARTVSA). Topologically, residues 809-1223 (YEHATVIPNT…AMSWVQKITG (415 aa)) are extracellular. 4 disulfide bridges follow: Cys-857/Cys-922, Cys-870/Cys-902, Cys-871/Cys-904, and Cys-876/Cys-886. Residues 892 to 909 (VYPFMWGGAYCFCDAENT) form an E1 fusion peptide loop region. N-linked (GlcNAc...) asparagine; by host glycans are attached at residues Asn-949 and Asn-1078. Intrachain disulfides connect Cys-1067–Cys-1079, Cys-1109–Cys-1184, Cys-1114–Cys-1188, and Cys-1136–Cys-1178. A helical transmembrane segment spans residues 1224–1244 (GVGLVVAIAALILIIVLCVSF). The S-palmitoyl cysteine; by host moiety is linked to residue Cys-1241. At 1245-1247 (SRH) the chain is on the cytoplasmic side.

As to quaternary structure, homodimer. Homomultimer. Interacts with host karyopherin KPNA4; this interaction allows the nuclear import of the viral capsid protein. Interacts with spike glycoprotein E2. Interacts with host IRAK1; the interaction leads to inhibition of IRAK1-dependent signaling. In terms of assembly, the precursor of protein E3/E2 and E1 form a heterodimer shortly after synthesis. The precursor of protein E3/E2 and E1 form a heterodimer shortly after synthesis. Processing of the precursor of protein E3/E2 into E2 and E3 results in a heterodimer of the spike glycoproteins E2 and E1. Spike at virion surface are constituted of three E2-E1 heterodimers. After target cell attachment and endocytosis, E1 change conformation to form homotrimers. Interacts with 6K protein. As to quaternary structure, interacts with spike glycoprotein E1. Processing of the precursor of protein E3/E2 into E2 and E3 results in a heterodimer of the spike glycoproteins E2 and E1. Spike at virion surface are constituted of a trimer of E2-E1 heterodimers. Interacts with 6K protein. Interacts with host MXRA8; this interaction mediates virus entry. In terms of assembly, oligomer. Interacts with spike glycoprotein E1. Interacts with spike glycoprotein E2. In terms of processing, structural polyprotein: Specific enzymatic cleavages in vivo yield mature proteins. Capsid protein is auto-cleaved during polyprotein translation, unmasking a signal peptide at the N-terminus of the precursor of E3/E2. The remaining polyprotein is then targeted to the host endoplasmic reticulum, where host signal peptidase cleaves it into pE2, 6K and E1 proteins. pE2 is further processed to mature E3 and E2 by host furin in trans-Golgi vesicle. Post-translationally, palmitoylated via thioester bonds. These palmitoylations may induce disruption of the C-terminus transmembrane. This would result in the reorientation of E2 C-terminus from lumenal to cytoplasmic side. N-glycosylated. In terms of processing, palmitoylated via thioester bonds.

It localises to the virion. Its subcellular location is the host cytoplasm. The protein localises to the host cell membrane. It is found in the host nucleus. The protein resides in the virion membrane. It localises to the host Golgi apparatus. Its subcellular location is the host trans-Golgi network. The protein localises to the host endoplasmic reticulum. The enzyme catalyses Autocatalytic release of the core protein from the N-terminus of the togavirus structural polyprotein by hydrolysis of a -Trp-|-Ser- bond.. In terms of biological role, forms an icosahedral capsid with a T=4 symmetry composed of 240 copies of the capsid protein surrounded by a lipid membrane through which penetrate 80 spikes composed of trimers of E1-E2 heterodimers. The capsid protein binds to the viral RNA genome at a site adjacent to a ribosome binding site for viral genome translation following genome release. Possesses a protease activity that results in its autocatalytic cleavage from the nascent structural protein. Following its self-cleavage, the capsid protein transiently associates with ribosomes, and within several minutes the protein binds to viral RNA and rapidly assembles into icosahedric core particles. The resulting nucleocapsid eventually associates with the cytoplasmic domain of the spike glycoprotein E2 at the cell membrane, leading to budding and formation of mature virions. In case of infection, new virions attach to target cells and after clathrin-mediated endocytosis their membrane fuses with the host endosomal membrane. This leads to the release of the nucleocapsid into the cytoplasm, followed by an uncoating event necessary for the genomic RNA to become accessible. The uncoating might be triggered by the interaction of capsid proteins with ribosomes. Binding of ribosomes would release the genomic RNA since the same region is genomic RNA-binding and ribosome-binding. Specifically inhibits interleukin-1 receptor-associated kinase 1/IRAK1-dependent signaling during viral entry, representing a means by which the alphaviruses may evade innate immune detection and activation prior to viral gene expression. Its function is as follows. Provides the signal sequence for the translocation of the precursor of protein E3/E2 to the host endoplasmic reticulum. Furin-cleaved E3 remains associated with spike glycoprotein E1 and mediates pH protection of the latter during the transport via the secretory pathway. After virion release from the host cell, the assembly protein E3 is gradually released in the extracellular space. Plays a role in viral attachment to target host cell, by binding to the cell receptor MXRA8. Synthesized as a p62 precursor which is processed by furin at the cell membrane just before virion budding, giving rise to E2-E1 heterodimer. The p62-E1 heterodimer is stable, whereas E2-E1 is unstable and dissociate at low pH. p62 is processed at the last step, presumably to avoid E1 fusion activation before its final export to cell surface. E2 C-terminus contains a transitory transmembrane that would be disrupted by palmitoylation, resulting in reorientation of the C-terminal tail from lumenal to cytoplasmic side. This step is critical since E2 C-terminus is involved in budding by interacting with capsid proteins. This release of E2 C-terminus in cytoplasm occurs lately in protein export, and precludes premature assembly of particles at the endoplasmic reticulum membrane. Functionally, acts as a viroporin that participates in virus glycoprotein processing and transport to the plasma membrane, cell permeabilization and budding of viral particles. Disrupts the calcium homeostasis of the cell, probably at the endoplasmic reticulum level. This leads to cytoplasmic calcium elevation. Because of its lipophilic properties, the 6K protein is postulated to influence the selection of lipids that interact with the transmembrane domains of the glycoproteins, which, in turn, affects the deformability of the bilayer required for the extreme curvature that occurs as budding proceeds. Present in low amount in virions, about 3% compared to viral glycoproteins. In terms of biological role, class II viral fusion protein. Fusion activity is inactive as long as E1 is bound to E2 in mature virion. After virus attachment to target cell via host MXRA8 and endocytosis, acidification of the endosome induce dissociation of E1/E2 heterodimer and concomitant trimerization of the E1 subunits. This E1 trimer is fusion active, and promotes release of viral nucleocapsid in cytoplasm after endosome and viral membrane fusion. Efficient fusion requires the presence of cholesterol and sphingolipid in the target membrane. The protein is Structural polyprotein of Anopheles (Human).